The following is a 30-amino-acid chain: U10-ctenitoxin-Co1b (30 aa).

Cystine bridges form between C2/C17 and C9/C22.

As to expression, expressed by the venom gland.

The protein localises to the secreted. Antagonist of L-type calcium channels (Cav1/CACNA1). The chain is U10-ctenitoxin-Co1b from Ctenus ornatus (Brazilian spider).